A 146-amino-acid polypeptide reads, in one-letter code: Ribonuclease H (146 aa).

In terms of domain architecture, RNase H type-1 spans 1-141; the sequence is MKHVDIFTDG…ADELARKGME (141 aa). Residues Asp9, Glu47, Asp69, and Asp133 each contribute to the Mg(2+) site. The disordered stretch occupies residues 123-146; sequence HAGHPENERADELARKGMEPFKRR. The segment covering 125-146 has biased composition (basic and acidic residues); the sequence is GHPENERADELARKGMEPFKRR.

Belongs to the RNase H family. In terms of assembly, monomer. It depends on Mg(2+) as a cofactor.

It is found in the cytoplasm. The catalysed reaction is Endonucleolytic cleavage to 5'-phosphomonoester.. Its function is as follows. Endonuclease that specifically degrades the RNA of RNA-DNA hybrids. This chain is Ribonuclease H, found in Agrobacterium fabrum (strain C58 / ATCC 33970) (Agrobacterium tumefaciens (strain C58)).